The sequence spans 465 residues: UDP-N-acetylmuramate--L-alanine ligase (465 aa).

112-118 (GTHGKTT) contacts ATP.

It belongs to the MurCDEF family.

The protein localises to the cytoplasm. It carries out the reaction UDP-N-acetyl-alpha-D-muramate + L-alanine + ATP = UDP-N-acetyl-alpha-D-muramoyl-L-alanine + ADP + phosphate + H(+). Its pathway is cell wall biogenesis; peptidoglycan biosynthesis. In terms of biological role, cell wall formation. This Burkholderia multivorans (strain ATCC 17616 / 249) protein is UDP-N-acetylmuramate--L-alanine ligase.